Consider the following 222-residue polypeptide: Probable transaldolase 2 (222 aa).

Lys90 functions as the Schiff-base intermediate with substrate in the catalytic mechanism.

Belongs to the transaldolase family. Type 3B subfamily.

It is found in the cytoplasm. The enzyme catalyses D-sedoheptulose 7-phosphate + D-glyceraldehyde 3-phosphate = D-erythrose 4-phosphate + beta-D-fructose 6-phosphate. The protein operates within carbohydrate degradation; pentose phosphate pathway; D-glyceraldehyde 3-phosphate and beta-D-fructose 6-phosphate from D-ribose 5-phosphate and D-xylulose 5-phosphate (non-oxidative stage): step 2/3. Transaldolase is important for the balance of metabolites in the pentose-phosphate pathway. This Bacillus cereus (strain ATCC 14579 / DSM 31 / CCUG 7414 / JCM 2152 / NBRC 15305 / NCIMB 9373 / NCTC 2599 / NRRL B-3711) protein is Probable transaldolase 2.